Here is a 172-residue protein sequence, read N- to C-terminus: Ribosome maturation factor RimM (172 aa).

Positions 96–168 (EGEFYYHQII…RVDVELMEGL (73 aa)) constitute a PRC barrel domain.

Belongs to the RimM family. Binds ribosomal protein uS19.

It localises to the cytoplasm. Its function is as follows. An accessory protein needed during the final step in the assembly of 30S ribosomal subunit, possibly for assembly of the head region. Essential for efficient processing of 16S rRNA. May be needed both before and after RbfA during the maturation of 16S rRNA. It has affinity for free ribosomal 30S subunits but not for 70S ribosomes. This Streptococcus pyogenes serotype M18 (strain MGAS8232) protein is Ribosome maturation factor RimM.